The primary structure comprises 530 residues: Cilia- and flagella-associated protein 97 (530 aa).

At serine 19 the chain carries Phosphoserine. 2 disordered regions span residues 29–83 (TNSV…PVEN) and 116–258 (IPNR…LSTP). The span at 35-49 (KQNDDPKERIDKDTK) shows a compositional bias: basic and acidic residues. Over residues 50-63 (NVNSNTGMQTTENY) the composition is skewed to polar residues. Residues 67 to 82 (KGNERNVKFPPEHPVE) show a composition bias toward basic and acidic residues. Residues 129–139 (GDYYTDGEESS) show a composition bias toward acidic residues. The residue at position 133 (threonine 133) is a Phosphothreonine. 2 positions are modified to phosphoserine: serine 138 and serine 139. Over residues 170–203 (SSSSSSSLSSSSSGSGTDCLDGGSDSHLSDSSPS) the composition is skewed to low complexity. The residue at position 215 (serine 215) is a Phosphoserine. Residues 227-236 (TETQPSSTTP) are compositionally biased toward polar residues. Serine 245 and serine 327 each carry phosphoserine. Positions 372–447 (KNYSFTREEV…ALLKRLEAVK (76 aa)) form a coiled coil. Disordered regions lie at residues 395-417 (LSRQAEKPGSKSTIPRSADHPPK) and 483-530 (QYSP…TAWL). Residues 491–501 (SRTSSATSGLS) are compositionally biased toward polar residues.

This sequence belongs to the CFAP97 family.

In Pongo abelii (Sumatran orangutan), this protein is Cilia- and flagella-associated protein 97.